The chain runs to 125 residues: Small ribosomal subunit protein eS6 (125 aa).

The tract at residues 90-109 (KGPGFRPKEKGERRKKTVRG) is disordered.

This sequence belongs to the eukaryotic ribosomal protein eS6 family. As to quaternary structure, part of the 30S ribosomal subunit.

This chain is Small ribosomal subunit protein eS6, found in Pyrococcus furiosus (strain ATCC 43587 / DSM 3638 / JCM 8422 / Vc1).